A 466-amino-acid chain; its full sequence is Ribulose bisphosphate carboxylase (466 aa).

Asn-111 contributes to the substrate binding site. The active-site Proton acceptor is Lys-166. Substrate is bound at residue Lys-168. The Mg(2+) site is built by Lys-191, Asp-193, and Glu-194. Lys-191 is modified (N6-carboxylysine). His-287 serves as the catalytic Proton acceptor. The substrate site is built by Arg-288, His-321, and Ser-368.

This sequence belongs to the RuBisCO large chain family. Type II subfamily. As to quaternary structure, homodimer. It depends on Mg(2+) as a cofactor.

The enzyme catalyses 2 (2R)-3-phosphoglycerate + 2 H(+) = D-ribulose 1,5-bisphosphate + CO2 + H2O. It catalyses the reaction D-ribulose 1,5-bisphosphate + O2 = 2-phosphoglycolate + (2R)-3-phosphoglycerate + 2 H(+). Functionally, ruBisCO catalyzes two reactions: the carboxylation of D-ribulose 1,5-bisphosphate, the primary event in carbon dioxide fixation, as well as the oxidative fragmentation of the pentose substrate. Both reactions occur simultaneously and in competition at the same active site. The sequence is that of Ribulose bisphosphate carboxylase (cbbM) from Rhodospirillum rubrum.